The following is an 807-amino-acid chain: Glycerol-3-phosphate acyltransferase (807 aa).

The HXXXXD motif signature appears at 308 to 313; the sequence is CHRSHM.

It belongs to the GPAT/DAPAT family.

Its subcellular location is the cell inner membrane. The catalysed reaction is sn-glycerol 3-phosphate + an acyl-CoA = a 1-acyl-sn-glycero-3-phosphate + CoA. The protein operates within phospholipid metabolism; CDP-diacylglycerol biosynthesis; CDP-diacylglycerol from sn-glycerol 3-phosphate: step 1/3. The polypeptide is Glycerol-3-phosphate acyltransferase (Shewanella sp. (strain ANA-3)).